The sequence spans 1043 residues: MMNNHFHLQHDHPPQNVAHPFMQQPSTAVPSAPPATYGYLAQPAGQQPQWMTTTYQILPPSVGPATVAKRYYATTGPQTTHPTHPSTIQITNSFAQQSTPPKQQAATSCSPFKANNIRIISTAPSVYSLNKPPQEAHSTYAPVQSYYLPSGGGQTAGQINLLAASGTGKQLQPPPLVPVTNSTSPPSTVVLDRINICINNHYTETPTSLSSSLTTAQQPSPIIPAIQHKAILPLIDSSTADSSSCSSSSVSSSSYSGTATTSAAVVIVDEPDSTTTTPQTPPTTPEAMSSPGKSSPSPPLLATQSLLKGVNSMKPSFKTVEAAPPTPPTPPSPPPPPPAPPVAAPSPAVTYALQEDVFIKCNDGRFYLGTIIDQTSDQYLIRFDDQSEQWCEPDKLRKLGGGSSITAGGGGASTTESTNTSPSGPMCVACKRSDIEDVVEICERCGRGYHRGCTVEIVTGSGIWSCKRCAKPMKMQQPVSHKITKPAGICRQLPYHADKLSWDEKHRVNEEQIYCYCGKPGKFDHNMLQCCKCRNWFHTQCMQNFKKKLLRGDMFFVFCCTVCNNGIEFVRRMQIEWVDVLHIALYNLRKHQHQKYHHLLNDIWPFILEQRHQLPICEKWRTLPETALMERLKQTLKDYSDRFVCGREFKRAPAFYALRHSGPPHIPKVFLEPHEELSDELLEKRFKLMLMPEEPDEGANELPKRVPKDVYEFNTDEDDPVETSEDEIPIKQIIEKAKKQAAQKADKHDELPLKPDLADDNANDGDPGKLPAPIPPLLDANSSRKRKAFRLSKRYDNSRNHCDLSSDENSSSSRGTSSLDLIIPPPVNFLGRNNPFLMATPKKASQGRSISVGTGVGVNGIINSIFKLKGTSKEQPRMVRTIKRRLSAKDITIGPNQEVRRRRTRRLTTAIEVISTTTINPIPSHYLPIYAKDLQPPAPPMGKPTHGRLLRQRPQKQSPSQSRRNSTSSTATSSSSNGIGAPGHSMLDLKQSVNKYFGGAMNRIDAGEPFAIRAKRRMGNGQVQYLVEWGGDTATTAIGLLGN.

4 disordered regions span residues 1–34 (MMNN…SAPP), 271–302 (PDST…PLLA), 317–346 (FKTV…AAPS), and 395–422 (KLRK…NTSP). Over residues 25 to 34 (PSTAVPSAPP) the composition is skewed to low complexity. Residues 324–344 (PPTPPTPPSPPPPPPAPPVAA) show a composition bias toward pro residues. The 56-residue stretch at 349–404 (VTYALQEDVFIKCNDGRFYLGTIIDQTSDQYLIRFDDQSEQWCEPDKLRKLGGGSS) folds into the Tudor domain. Over residues 399–412 (LGGGSSITAGGGGA) the composition is skewed to gly residues. 2 PHD-type zinc fingers span residues 424-472 (GPMC…CAKP) and 512-560 (QIYC…VFCC). Residues 737–757 (AKKQAAQKADKHDELPLKPDL) show a composition bias toward basic and acidic residues. 2 disordered regions span residues 737–819 (AKKQ…TSSL) and 931–985 (AKDL…PGHS). Over residues 783 to 792 (SRKRKAFRLS) the composition is skewed to basic residues. Over residues 793–804 (KRYDNSRNHCDL) the composition is skewed to basic and acidic residues. Phosphoserine is present on residues Ser-805 and Ser-806. Low complexity predominate over residues 807–819 (DENSSSSRGTSSL). Residues 945-954 (THGRLLRQRP) are compositionally biased toward basic residues. Positions 955 to 977 (QKQSPSQSRRNSTSSTATSSSSN) are enriched in low complexity.

The protein belongs to the Polycomblike family. Component of a form of the Esc/E(z) complex present specifically during early embryogenesis which is composed of Caf1-55, esc, E(z), Su(z)12, Pcl and HDAC1/Rpd3. This complex is distinct from the PRC1 complex, which contains many other PcG proteins like Pc, Ph, Psc, Su(z)2. The two complexes however cooperate and interact together during the first 3 hours of development to establish PcG silencing. Interacts with corto in vitro.

The protein localises to the nucleus. It localises to the chromosome. In terms of biological role, polycomb group (PcG) protein. While PcG proteins are generally required to maintain the transcriptionally repressive state of homeotic genes throughout development, this protein is specifically required during the first 6 hours of embryogenesis to establish the repressed state. Component of the Esc/E(z) complex, which methylates 'Lys-9' and 'Lys-27' residues of histone H3, leading to transcriptional repression of the affected target gene. The Esc/E(z) complex is necessary but not sufficient for the repression of homeotic target genes, suggesting that the recruitment of the distinct PRC1 complex is also required. Required for the correct spatial expression of the homeotic genes of the Antennapedia and Bithorax complexes. The protein is Polycomb protein Pcl (Pcl) of Drosophila melanogaster (Fruit fly).